The sequence spans 88 residues: Co-chaperonin GroES (88 aa).

The protein belongs to the GroES chaperonin family. Heptamer of 7 subunits arranged in a ring. Interacts with the chaperonin GroEL.

Its subcellular location is the cytoplasm. Its function is as follows. Together with the chaperonin GroEL, plays an essential role in assisting protein folding. The GroEL-GroES system forms a nano-cage that allows encapsulation of the non-native substrate proteins and provides a physical environment optimized to promote and accelerate protein folding. GroES binds to the apical surface of the GroEL ring, thereby capping the opening of the GroEL channel. This chain is Co-chaperonin GroES, found in Rubrobacter xylanophilus (strain DSM 9941 / JCM 11954 / NBRC 16129 / PRD-1).